Reading from the N-terminus, the 470-residue chain is ATP synthase subunit beta (470 aa).

155 to 162 (GGAGVGKT) is an ATP binding site.

Belongs to the ATPase alpha/beta chains family. F-type ATPases have 2 components, CF(1) - the catalytic core - and CF(0) - the membrane proton channel. CF(1) has five subunits: alpha(3), beta(3), gamma(1), delta(1), epsilon(1). CF(0) has three main subunits: a(1), b(2) and c(9-12). The alpha and beta chains form an alternating ring which encloses part of the gamma chain. CF(1) is attached to CF(0) by a central stalk formed by the gamma and epsilon chains, while a peripheral stalk is formed by the delta and b chains.

It localises to the cell inner membrane. The catalysed reaction is ATP + H2O + 4 H(+)(in) = ADP + phosphate + 5 H(+)(out). Produces ATP from ADP in the presence of a proton gradient across the membrane. The catalytic sites are hosted primarily by the beta subunits. This Oleidesulfovibrio alaskensis (strain ATCC BAA-1058 / DSM 17464 / G20) (Desulfovibrio alaskensis) protein is ATP synthase subunit beta.